We begin with the raw amino-acid sequence, 153 residues long: Transthyretin (153 aa).

The N-terminal stretch at 1–19 (MASFKSFLLLALLAIVSEA) is a signal peptide. Residue cysteine 34 is modified to Sulfocysteine. Residues lysine 39 and glutamate 78 each coordinate L-thyroxine. A glycan (N-linked (GlcNAc...) asparagine) is linked at asparagine 81. L-thyroxine is bound at residue serine 141.

The protein belongs to the transthyretin family. As to quaternary structure, homotetramer. Dimer of dimers. In the homotetramer, subunits assemble around a central channel that can accommodate two ligand molecules. Interacts with rbp4. Post-translationally, sulfonation of the reactive cysteine Cys-34 enhances the stability of the native conformation of TTR, avoiding misassembly of the protein leading to amyloid formation. In terms of tissue distribution, detected in plasma (at protein level). Expressed during metamorphosis in tadpole liver, but not in tadpole brain nor adult liver. Between 1.5 and 3 days of development, also expressed in the mesoderm of the kidney.

It is found in the secreted. Its function is as follows. Thyroid hormone-binding protein, with a much higher binding affinity for triiodothyronine (T3) than for thyroxine (T4). Probably transports triiodothyronine from the bloodstream to the brain. The chain is Transthyretin (ttr) from Xenopus laevis (African clawed frog).